Here is a 283-residue protein sequence, read N- to C-terminus: uncharacterized protein (283 aa).

Solcar repeat units lie at residues 14 to 95 (QPVW…LKHL), 102 to 185 (NDHA…SEAV), and 190 to 274 (GLAL…TLQG). 6 helical membrane-spanning segments follow: residues 20–40 (TLAG…FDVI), 70–90 (GNVV…VAFS), 105–125 (AVNF…SYPL), 157–177 (FFPG…CFFM), 184–204 (AVLS…IAGA), and 249–266 (GLSV…ITML).

It belongs to the mitochondrial carrier (TC 2.A.29) family.

It localises to the mitochondrion inner membrane. This is an uncharacterized protein from Schizosaccharomyces pombe (strain 972 / ATCC 24843) (Fission yeast).